The following is a 158-amino-acid chain: Eukaryotic translation initiation factor 5A-3 (158 aa).

Residues 1-10 (MSDDEHHFES) are compositionally biased toward basic and acidic residues. The tract at residues 1–23 (MSDDEHHFESSDAGASKTYPQQA) is disordered. Phosphoserine is present on Ser2. Residue Lys51 is modified to Hypusine.

The protein belongs to the eIF-5A family. Lys-52 undergoes hypusination, a unique post-translational modification that consists in the addition of a butylamino group from spermidine to lysine side chain, leading to the formation of the unusual amino acid hypusine. eIF-5As are the only known proteins to undergo this modification, which is essential for their function. Expressed in the vascular tissues of roots, stems and leaves. Localized in phloem companion cells rather than sieve-tube members. Not expressed in xylem or procambium. Detected in root tips and in the chalazal tissue of fertilized ovules.

In terms of biological role, translation factor that promotes translation elongation and termination, particularly upon ribosome stalling at specific amino acid sequence contexts. Binds between the exit (E) and peptidyl (P) site of the ribosome and promotes rescue of stalled ribosome: specifically required for efficient translation of polyproline-containing peptides as well as other motifs that stall the ribosome. Acts as a ribosome quality control (RQC) cofactor by joining the RQC complex to facilitate peptidyl transfer during CAT tailing step. Involved in supporting growth and plays a regulatory role in the response to sub-lethal osmotic and nutrient stress. This Arabidopsis thaliana (Mouse-ear cress) protein is Eukaryotic translation initiation factor 5A-3 (ELF5A-3).